A 338-amino-acid polypeptide reads, in one-letter code: Eukaryotic translation initiation factor 3 subunit H (338 aa).

The MPN domain occupies 22 to 154 (VQCDGLAVMK…LKAYRLTPQA (133 aa)).

Belongs to the eIF-3 subunit H family. In terms of assembly, component of the eukaryotic translation initiation factor 3 (eIF-3) complex. The eIF-3 complex interacts with pix. Interacts with mxt.

It localises to the cytoplasm. Functionally, component of the eukaryotic translation initiation factor 3 (eIF-3) complex, which is involved in protein synthesis of a specialized repertoire of mRNAs and, together with other initiation factors, stimulates binding of mRNA and methionyl-tRNAi to the 40S ribosome. The eIF-3 complex specifically targets and initiates translation of a subset of mRNAs involved in cell proliferation. The sequence is that of Eukaryotic translation initiation factor 3 subunit H from Drosophila sechellia (Fruit fly).